Reading from the N-terminus, the 611-residue chain is Protein Spindly (611 aa).

A coiled-coil region spans residues 1–288 (MEESETVLKL…QFQSLQKQHA (288 aa)). Basic and acidic residues predominate over residues 499 to 511 (LKEDSSLSTKEQD). Residues 499 to 611 (LKEDSSLSTK…PAATTQCPQQ (113 aa)) form a disordered region. Residues 549–567 (RNTNNCSVTSTSPRSASEE) are compositionally biased toward polar residues. The span at 570-583 (SESKRFDEEQEKRK) shows a compositional bias: basic and acidic residues.

This sequence belongs to the Spindly family.

Its subcellular location is the chromosome. It is found in the centromere. The protein localises to the kinetochore. Required for the localization of dynein and dynactin to the mitotic kintochore. Dynein is believed to control the initial lateral interaction between the kinetochore and spindle microtubules and to facilitate the subsequent formation of end-on kinetochore-microtubule attachments mediated by the NDC80 complex. May act as an adapter protein linking the dynein motor complex to various cargos. This is Protein Spindly (spdl1) from Xenopus tropicalis (Western clawed frog).